We begin with the raw amino-acid sequence, 887 residues long: MINTSPLLNYVSSHHDIKAINQWRTDVEKQLQDSYENGQSIREIIKARSDLVDEALVFLWKHAELDQSKLGLFAVGGYGRREMLPYSDVDIMILSEDEISEENEKRISTFISSLWDVGNFKPGISVRTIQSCVEQAATDLTVATTLIEARLITGNTQLAKWPRRIVSQTWTDKTFYDAKMAEQAKRYHQHNNTESNLEPDIKNAPGGIRDINQIGWIAKRHFRVNRIYDLVHLGFISEFELAVLEEAESFLWEIRHHLHRLAKRDENRLLFDHQREIAAKFGYVRQEGQPVNYGVEQFMKRYYRTAQQVSTLNEMLLAYFSESVITPRLPNYERKIEVVNDHFKIVDNKLAVQHHKIFAEHPSAILELFYILANRPDIEGIRARTLRLLILAAKRINQSYRDNPEHQALFMSIIRSPYRLYDTLVAMKRYGVLGNYIPAFGQIMGLMQYDLFHIYTVDAHTLLLLRNLNRFREPEFAKEFPVVSSVFQRLARQDIVFIAALFHDIAKGRGGDHSELGAEDAIEFGRAHGFTERECKLIAWLIQNHLLMSLTAQKKDISDPDVVKDFAEKLGDMEHLDYLYTLTVADINATNPKLWNTWRASLMRQLYTHARDVIRTGLGRPVDYQMLIEDTKFAASELLVNNFALADVEKVWQELGDEYFIKESADEIAWHTQAILKHGDNPEPLVLLRAHRKAAQDAVQIFIYTRDQPNLFATTVAVLDRMNLDVQDAKIITASTAFSLDTYVVLDRFGTLLTDPEREETVKNALVKALSQPDQYPGLMQRRIPRQLRHFDIENTVDVTLNEALQQNMVEISTLDHPGLLARVGGLFMMQGLDIHSARIATLGERAEDIFFVTKKDGKPLNNEEVKLFSEKLKAALDEASNQICQH.

The tract at residues 1 to 337 (MINTSPLLNY…RLPNYERKIE (337 aa)) is uridylyltransferase. The tract at residues 339-699 (VNDHFKIVDN…AHRKAAQDAV (361 aa)) is uridylyl-removing. The HD domain maps to 457-579 (VDAHTLLLLR…LGDMEHLDYL (123 aa)). ACT domains follow at residues 700–782 (QIFI…LMQR) and 809–887 (MVEI…ICQH).

It belongs to the GlnD family. Mg(2+) serves as cofactor.

The catalysed reaction is [protein-PII]-L-tyrosine + UTP = [protein-PII]-uridylyl-L-tyrosine + diphosphate. The enzyme catalyses [protein-PII]-uridylyl-L-tyrosine + H2O = [protein-PII]-L-tyrosine + UMP + H(+). With respect to regulation, uridylyltransferase (UTase) activity is inhibited by glutamine, while glutamine activates uridylyl-removing (UR) activity. Modifies, by uridylylation and deuridylylation, the PII regulatory proteins (GlnB and homologs), in response to the nitrogen status of the cell that GlnD senses through the glutamine level. Under low glutamine levels, catalyzes the conversion of the PII proteins and UTP to PII-UMP and PPi, while under higher glutamine levels, GlnD hydrolyzes PII-UMP to PII and UMP (deuridylylation). Thus, controls uridylylation state and activity of the PII proteins, and plays an important role in the regulation of nitrogen assimilation and metabolism. The polypeptide is Bifunctional uridylyltransferase/uridylyl-removing enzyme (Acinetobacter baumannii (strain AB307-0294)).